Here is a 652-residue protein sequence, read N- to C-terminus: Acetyl-coenzyme A synthetase (652 aa).

CoA-binding positions include 190–193 (RGGR) and T310. ATP-binding positions include 386 to 388 (GEP), 410 to 415 (DTWWQT), D499, and R514. Residue S522 participates in CoA binding. An ATP-binding site is contributed by R525. Mg(2+)-binding residues include V536, H538, and V541. R583 contributes to the CoA binding site. The residue at position 608 (K608) is an N6-acetyllysine.

Belongs to the ATP-dependent AMP-binding enzyme family. Mg(2+) serves as cofactor. In terms of processing, acetylated. Deacetylation by the SIR2-homolog deacetylase activates the enzyme.

It carries out the reaction acetate + ATP + CoA = acetyl-CoA + AMP + diphosphate. Its function is as follows. Catalyzes the conversion of acetate into acetyl-CoA (AcCoA), an essential intermediate at the junction of anabolic and catabolic pathways. AcsA undergoes a two-step reaction. In the first half reaction, AcsA combines acetate with ATP to form acetyl-adenylate (AcAMP) intermediate. In the second half reaction, it can then transfer the acetyl group from AcAMP to the sulfhydryl group of CoA, forming the product AcCoA. The protein is Acetyl-coenzyme A synthetase of Methylorubrum extorquens (strain CM4 / NCIMB 13688) (Methylobacterium extorquens).